The sequence spans 121 residues: Large ribosomal subunit protein bL12 (121 aa).

It belongs to the bacterial ribosomal protein bL12 family. As to quaternary structure, homodimer. Part of the ribosomal stalk of the 50S ribosomal subunit. Forms a multimeric L10(L12)X complex, where L10 forms an elongated spine to which 2 to 4 L12 dimers bind in a sequential fashion. Binds GTP-bound translation factors.

In terms of biological role, forms part of the ribosomal stalk which helps the ribosome interact with GTP-bound translation factors. Is thus essential for accurate translation. The chain is Large ribosomal subunit protein bL12 from Erwinia tasmaniensis (strain DSM 17950 / CFBP 7177 / CIP 109463 / NCPPB 4357 / Et1/99).